Consider the following 398-residue polypeptide: 1-deoxy-D-xylulose 5-phosphate reductoisomerase (398 aa).

The NADPH site is built by T11, G12, S13, I14, R38, N39, and N125. K126 serves as a coordination point for 1-deoxy-D-xylulose 5-phosphate. E127 contacts NADPH. Residue D151 participates in Mn(2+) binding. Residues S152, E153, S179, and H202 each coordinate 1-deoxy-D-xylulose 5-phosphate. E153 contacts Mn(2+). G208 contributes to the NADPH binding site. Residues S215, N220, K221, and E224 each coordinate 1-deoxy-D-xylulose 5-phosphate. A Mn(2+)-binding site is contributed by E224.

The protein belongs to the DXR family. Requires Mg(2+) as cofactor. Mn(2+) is required as a cofactor.

The enzyme catalyses 2-C-methyl-D-erythritol 4-phosphate + NADP(+) = 1-deoxy-D-xylulose 5-phosphate + NADPH + H(+). It functions in the pathway isoprenoid biosynthesis; isopentenyl diphosphate biosynthesis via DXP pathway; isopentenyl diphosphate from 1-deoxy-D-xylulose 5-phosphate: step 1/6. Catalyzes the NADPH-dependent rearrangement and reduction of 1-deoxy-D-xylulose-5-phosphate (DXP) to 2-C-methyl-D-erythritol 4-phosphate (MEP). The protein is 1-deoxy-D-xylulose 5-phosphate reductoisomerase of Burkholderia vietnamiensis (strain G4 / LMG 22486) (Burkholderia cepacia (strain R1808)).